Reading from the N-terminus, the 152-residue chain is Deoxyuridine 5'-triphosphate nucleotidohydrolase (152 aa).

Substrate-binding positions include Arg-71–Gly-73, Asn-84, Leu-88–Asp-90, and Met-98.

Belongs to the dUTPase family. Mg(2+) is required as a cofactor.

The enzyme catalyses dUTP + H2O = dUMP + diphosphate + H(+). Its pathway is pyrimidine metabolism; dUMP biosynthesis; dUMP from dCTP (dUTP route): step 2/2. Its function is as follows. This enzyme is involved in nucleotide metabolism: it produces dUMP, the immediate precursor of thymidine nucleotides and it decreases the intracellular concentration of dUTP so that uracil cannot be incorporated into DNA. This chain is Deoxyuridine 5'-triphosphate nucleotidohydrolase, found in Erwinia tasmaniensis (strain DSM 17950 / CFBP 7177 / CIP 109463 / NCPPB 4357 / Et1/99).